The primary structure comprises 126 residues: Large ribosomal subunit protein uL22 (126 aa).

Belongs to the universal ribosomal protein uL22 family. As to quaternary structure, part of the 50S ribosomal subunit.

Functionally, this protein binds specifically to 23S rRNA; its binding is stimulated by other ribosomal proteins, e.g. L4, L17, and L20. It is important during the early stages of 50S assembly. It makes multiple contacts with different domains of the 23S rRNA in the assembled 50S subunit and ribosome. Its function is as follows. The globular domain of the protein is located near the polypeptide exit tunnel on the outside of the subunit, while an extended beta-hairpin is found that lines the wall of the exit tunnel in the center of the 70S ribosome. This chain is Large ribosomal subunit protein uL22, found in Sphingopyxis alaskensis (strain DSM 13593 / LMG 18877 / RB2256) (Sphingomonas alaskensis).